The primary structure comprises 117 residues: MTRVKRGKITCRTRKKRMQSVKGFRGAWSTLSRPAMQGSLRALNYSYKHRRKNVKTFRRLSIVRFNALIRNSGLPFTYNRLIALINLYNCRLNRNVLSQLGIRDSNTFTKLMKFYYH.

It belongs to the bacterial ribosomal protein bL20 family.

Its subcellular location is the plastid. The protein resides in the chloroplast. Binds directly to 23S ribosomal RNA and is necessary for the in vitro assembly process of the 50S ribosomal subunit. It is not involved in the protein synthesizing functions of that subunit. The protein is Large ribosomal subunit protein bL20c (rpl20) of Bigelowiella natans (Pedinomonas minutissima).